The chain runs to 350 residues: 3-isopropylmalate dehydrogenase (350 aa).

NAD(+) is bound at residue 76-87; the sequence is GPKWDNAPKRPE. 4 residues coordinate substrate: Arg-94, Arg-104, Arg-132, and Asp-217. Mg(2+)-binding residues include Asp-217, Asp-241, and Asp-245. Residue 275–287 participates in NAD(+) binding; sequence GSAPDIANQNIAN.

It belongs to the isocitrate and isopropylmalate dehydrogenases family. LeuB type 1 subfamily. Homodimer. Requires Mg(2+) as cofactor. Mn(2+) is required as a cofactor.

The protein resides in the cytoplasm. It catalyses the reaction (2R,3S)-3-isopropylmalate + NAD(+) = 4-methyl-2-oxopentanoate + CO2 + NADH. Its pathway is amino-acid biosynthesis; L-leucine biosynthesis; L-leucine from 3-methyl-2-oxobutanoate: step 3/4. Its function is as follows. Catalyzes the oxidation of 3-carboxy-2-hydroxy-4-methylpentanoate (3-isopropylmalate) to 3-carboxy-4-methyl-2-oxopentanoate. The product decarboxylates to 4-methyl-2 oxopentanoate. In Listeria innocua serovar 6a (strain ATCC BAA-680 / CLIP 11262), this protein is 3-isopropylmalate dehydrogenase.